Reading from the N-terminus, the 307-residue chain is S-methyl-5'-thioadenosine phosphorylase (307 aa).

Phosphate is bound by residues T20, 62–63 (RH), and 95–96 (SA). M197 lines the substrate pocket. Residue S198 coordinates phosphate. 221 to 223 (DYD) provides a ligand contact to substrate.

Belongs to the PNP/MTAP phosphorylase family. MTAP subfamily. As to quaternary structure, homotrimer.

Its subcellular location is the cytoplasm. The protein resides in the nucleus. It carries out the reaction S-methyl-5'-thioadenosine + phosphate = 5-(methylsulfanyl)-alpha-D-ribose 1-phosphate + adenine. The protein operates within amino-acid biosynthesis; L-methionine biosynthesis via salvage pathway; S-methyl-5-thio-alpha-D-ribose 1-phosphate from S-methyl-5'-thioadenosine (phosphorylase route): step 1/1. In terms of biological role, catalyzes the reversible phosphorylation of S-methyl-5'-thioadenosine (MTA) to adenine and 5-methylthioribose-1-phosphate. Involved in the breakdown of MTA, a major by-product of polyamine biosynthesis. Responsible for the first step in the methionine salvage pathway after MTA has been generated from S-adenosylmethionine. Has broad substrate specificity with 6-aminopurine nucleosides as preferred substrates. This is S-methyl-5'-thioadenosine phosphorylase from Fusarium vanettenii (strain ATCC MYA-4622 / CBS 123669 / FGSC 9596 / NRRL 45880 / 77-13-4) (Fusarium solani subsp. pisi).